The following is a 301-amino-acid chain: Protease HtpX (301 aa).

2 helical membrane-spanning segments follow: residues 4–24 (IGLF…ILSL) and 38–58 (LGNL…ISLL). His-147 is a Zn(2+) binding site. The active site involves Glu-148. Zn(2+) is bound at residue His-151. 2 helical membrane passes run 155 to 175 (GDMV…MFFA) and 200 to 220 (FAIT…IVMW). Position 226 (Glu-226) interacts with Zn(2+).

The protein belongs to the peptidase M48B family. The cofactor is Zn(2+).

It localises to the cell inner membrane. This is Protease HtpX from Acinetobacter baylyi (strain ATCC 33305 / BD413 / ADP1).